We begin with the raw amino-acid sequence, 893 residues long: Exocyst complex component 4 (893 aa).

Residues 1-27 (MNENGATPVAAARRHRPLPAERATSNS) form a disordered region.

Belongs to the SEC8 family. The exocyst complex is composed of sec-3/exoc1, sec-5/exoc2, sec-6/exoc3, sec-8/exoc4, sec-10/exoc5, sec-15/exoc6, exo-70/exoc7 and exo-84/exoc8. Pseudocoelom.

Its function is as follows. Component of the exocyst complex involved in the docking of exocytic vesicles with fusion sites on the plasma membrane. The polypeptide is Exocyst complex component 4 (sec-8) (Caenorhabditis elegans).